A 149-amino-acid polypeptide reads, in one-letter code: L-alanine exporter AlaE (149 aa).

The next 4 membrane-spanning stretches (helical) occupy residues 16-36, 46-66, 85-105, and 112-132; these read FAMVVYCSVVNMLIEIFLSGM, LVAIPVNILIAWPYGVYRDLI, VLAYVTFQSPVYIIILLTVGA, and AAVSSNIVVSMLMGAVYGYFL.

Belongs to the AlaE exporter family.

The protein localises to the cell inner membrane. Its function is as follows. Exports L-alanine. This Salmonella arizonae (strain ATCC BAA-731 / CDC346-86 / RSK2980) protein is L-alanine exporter AlaE.